Here is an 843-residue protein sequence, read N- to C-terminus: Elongation factor 2 (843 aa).

One can recognise a tr-type G domain in the interval 17–253 (HNIRNMSVIA…LWGENFFDPA (237 aa)). Residue 26–33 (AHVDHGKS) participates in GTP binding. Residues Thr-57 and Thr-59 each carry the phosphothreonine modification. GTP is bound at residue 158 to 161 (NKMD). His-700 carries the diphthamide modification.

The protein belongs to the TRAFAC class translation factor GTPase superfamily. Classic translation factor GTPase family. EF-G/EF-2 subfamily. Post-translationally, phosphorylation by EF-2 kinase completely inactivates EF-2.

The protein resides in the cytoplasm. It carries out the reaction GTP + H2O = GDP + phosphate + H(+). Catalyzes the GTP-dependent ribosomal translocation step during translation elongation. During this step, the ribosome changes from the pre-translocational (PRE) to the post-translocational (POST) state as the newly formed A-site-bound peptidyl-tRNA and P-site-bound deacylated tRNA move to the P and E sites, respectively. Catalyzes the coordinated movement of the two tRNA molecules, the mRNA and conformational changes in the ribosome. The polypeptide is Elongation factor 2 (Beta vulgaris (Sugar beet)).